A 487-amino-acid polypeptide reads, in one-letter code: 3-octaprenyl-4-hydroxybenzoate carboxy-lyase (487 aa).

Residue Asn172 coordinates Mn(2+). Residues 175–177 (IYR), 189–191 (RWL), and 194–195 (RG) each bind prenylated FMN. Glu238 is a binding site for Mn(2+). Asp287 acts as the Proton donor in catalysis.

Belongs to the UbiD family. Homohexamer. Prenylated FMN serves as cofactor. The cofactor is Mn(2+).

The protein resides in the cell membrane. The catalysed reaction is a 4-hydroxy-3-(all-trans-polyprenyl)benzoate + H(+) = a 2-(all-trans-polyprenyl)phenol + CO2. It functions in the pathway cofactor biosynthesis; ubiquinone biosynthesis. Functionally, catalyzes the decarboxylation of 3-octaprenyl-4-hydroxy benzoate to 2-octaprenylphenol, an intermediate step in ubiquinone biosynthesis. The polypeptide is 3-octaprenyl-4-hydroxybenzoate carboxy-lyase (Actinobacillus pleuropneumoniae serotype 3 (strain JL03)).